Reading from the N-terminus, the 43-residue chain is Lanthionine-containing peptide SapB (43 aa).

The first 21 residues, 1–21 (MALLDLQAMDTPAEDSFGELR), serve as a signal peptide directing secretion. 2 cross-links (lanthionine (Ser-Cys)) span residues 24–31 (SQVSLLVC) and 34–41 (SSLSVVLC). Serine 27 and serine 37 each carry 2,3-didehydroalanine (Ser).

It belongs to the lanthionine-containing morphogen protein family. In terms of processing, maturation involves the enzymatic conversion of Ser into dehydrated AA and the formation of thioether bonds with cysteine. This is followed by membrane translocation and cleavage of the modified precursor.

Functionally, lanthionine-containing peptide devoid of antibiotic properties, involved in the formation of aerial mycelium. Suggested to self-assemble at air-water interfaces, thus providing a film of surfactant through which nascent aerial hyphae can emerge. The aerial hyphae differentiate further into spores. This is Lanthionine-containing peptide SapB (ramS) from Streptomyces griseus.